A 248-amino-acid polypeptide reads, in one-letter code: PF03932 family protein CutC (248 aa).

The protein belongs to the CutC family. Homodimer.

Its subcellular location is the cytoplasm. The chain is PF03932 family protein CutC from Salmonella enteritidis PT4 (strain P125109).